Reading from the N-terminus, the 252-residue chain is Proteasome subunit alpha type-3 (252 aa).

It belongs to the peptidase T1A family. In terms of assembly, the 26S proteasome consists of a 20S proteasome core and two 19S regulatory subunits. The 20S proteasome core is composed of 28 subunits that are arranged in four stacked rings, resulting in a barrel-shaped structure. The two end rings are each formed by seven alpha subunits, and the two central rings are each formed by seven beta subunits. The catalytic chamber with the active sites is on the inside of the barrel.

Its subcellular location is the cytoplasm. The protein localises to the nucleus. Its function is as follows. The proteasome is a multicatalytic proteinase complex which is characterized by its ability to cleave peptides with Arg, Phe, Tyr, Leu, and Glu adjacent to the leaving group at neutral or slightly basic pH. The proteasome has an ATP-dependent proteolytic activity. This is Proteasome subunit alpha type-3 from Acanthamoeba castellanii (Amoeba).